We begin with the raw amino-acid sequence, 657 residues long: MLSARSFLSSARTIARSSLMSARSLSDKPKGHVIGIDLGTTNSCVSIMEGKTPKVIENAEGVRTTPSTVAFTADGERLVGAPAKRQAVTNSANTLFATKRLIGRRYEDPEVQKDLKVVPYKIVKASNGDAWVEAQGKVYSPSQVGAFVLMKMKETAESYLGTTVNNAVVTVPAYFNDSQRQATKDAGQISGLNVLRVINEPTAAALAYGLDKDAGDKIIAVYDLGGGTFDVSILEIQKGVFEVKSTNGDTFLGGEDFDHALVHHLVGEFKKEQGVDLTKDPQAMQRLREAAEKAKCELSSTTQTDINLPYITMDQSGPKHLNLKLTRAKFEQIVGDLIKRTIEPCRKALHDAEVKSSQIADVLLVGGMSRMPKVQATVQEIFGKVPSKAVNPDEAVAMGAAIQGAVLAGDVTDVLLLDVTPLSLGIETLGGIMTKLITRNTTIPTKKSQVFSTAADGQTQVQIKVFQGEREMATSNKLLGQFSLVGIPPAPRGVPQVEVTFDIDANGIVNVSARDRGTGKEQQIVIQSSGGLSKDQIENMIKEAEKNAAEDAKRKELVEVINQAEGIIHDTEAKMTEFADQLPKDECEALRTKIADTKKILDNKDNETPEAIKEACNTLQQQSLKLFEAAYKNMAAKNSGGDAQEAKTAEEPKKEQN.

The N-terminal 27 residues, 1–27 (MLSARSFLSSARTIARSSLMSARSLSD), are a transit peptide targeting the mitochondrion. The interval 637 to 657 (KNSGGDAQEAKTAEEPKKEQN) is disordered. Residues 644-657 (QEAKTAEEPKKEQN) show a composition bias toward basic and acidic residues.

Belongs to the heat shock protein 70 family.

The protein resides in the mitochondrion. In Caenorhabditis elegans, this protein is Heat shock protein hsp-6.